The primary structure comprises 584 residues: MQFGELVKALAAVESTTQRSVMVKLLASLFKKALPEEIDKVIYLILGDLRPPWEGLELGVGEKLCLRALAKATGTSQAELESMYKKTGDIGEAARRALASSKRPGLLAFGSQKPLEVSEVYDALIKVARATGEGAQDMKIALLSSLFARSSPEEGKYIARFVVGKLRLGVADMTIIEALADAYGVRKEDLERAYHVYPDLGHLAKLVASGKPLDEVKVTPGVPVLPMLAQRLSSSSEILAKLGGAAICEYKYDGERAQIHISQSGVRIFSRRLEDITHAYPDVVKAVREAVSAREAILEGEIVAVDPDTGEMLPFQELMHRKRKHEVAAAMEMYPTVLYLFDIVYVDGEDLTNEPLIYRRVKLSEIVHESDKVQIAKWQMFDDPDTVDVFFHEAVSVGTEGLICKSPTSEYEMGARGWNWIKYKRDYKSEMIDTVDLVVVGAFYGRGKRAGLYGAFLLAAYDPSSDMFYTVCKVGSGFTDADLKKMYEILQPLKIPHRHPRVSSKMEADVWFVPQVVIEVIGAEITLSPLHTCCLGAVRPGVGLAVRFPRFTGRYRTDKGPEQATTVAEMLELYKRQKKVAQPE.

Residue E249 coordinates ATP. Catalysis depends on K251, which acts as the N6-AMP-lysine intermediate. R256, R271, E301, F341, R416, and K422 together coordinate ATP.

Belongs to the ATP-dependent DNA ligase family. Mg(2+) is required as a cofactor.

It catalyses the reaction ATP + (deoxyribonucleotide)n-3'-hydroxyl + 5'-phospho-(deoxyribonucleotide)m = (deoxyribonucleotide)n+m + AMP + diphosphate.. Its function is as follows. DNA ligase that seals nicks in double-stranded DNA during DNA replication, DNA recombination and DNA repair. This Pyrobaculum arsenaticum (strain DSM 13514 / JCM 11321 / PZ6) protein is DNA ligase.